We begin with the raw amino-acid sequence, 340 residues long: tRNA dimethylallyltransferase (340 aa).

The segment at 1-25 (MDQNRSPNGRDCREPPSPSSTARPG) is disordered. 31 to 38 (GPTATGKS) is an ATP binding site. Residue 33-38 (TATGKS) participates in substrate binding. The tract at residues 56–59 (DSRQ) is interaction with substrate tRNA.

It belongs to the IPP transferase family. In terms of assembly, monomer. Mg(2+) is required as a cofactor.

It carries out the reaction adenosine(37) in tRNA + dimethylallyl diphosphate = N(6)-dimethylallyladenosine(37) in tRNA + diphosphate. Functionally, catalyzes the transfer of a dimethylallyl group onto the adenine at position 37 in tRNAs that read codons beginning with uridine, leading to the formation of N6-(dimethylallyl)adenosine (i(6)A). In Synechococcus sp. (strain JA-3-3Ab) (Cyanobacteria bacterium Yellowstone A-Prime), this protein is tRNA dimethylallyltransferase.